Reading from the N-terminus, the 954-residue chain is Valine--tRNA ligase (954 aa).

The short motif at 48 to 58 is the 'HIGH' region element; it reads PNVTGSLHMGH. A 'KMSKS' region motif is present at residues 560 to 564; that stretch reads KMSKS. ATP is bound at residue lysine 563. A coiled-coil region spans residues 883-953; that stretch reads AGFINKEAEL…IQEQYKAIEA (71 aa).

The protein belongs to the class-I aminoacyl-tRNA synthetase family. ValS type 1 subfamily. In terms of assembly, monomer.

Its subcellular location is the cytoplasm. It carries out the reaction tRNA(Val) + L-valine + ATP = L-valyl-tRNA(Val) + AMP + diphosphate. Catalyzes the attachment of valine to tRNA(Val). As ValRS can inadvertently accommodate and process structurally similar amino acids such as threonine, to avoid such errors, it has a 'posttransfer' editing activity that hydrolyzes mischarged Thr-tRNA(Val) in a tRNA-dependent manner. The sequence is that of Valine--tRNA ligase from Haemophilus influenzae (strain PittEE).